Here is a 295-residue protein sequence, read N- to C-terminus: Protein gurken (295 aa).

A signal peptide spans 1 to 26 (MMQIPFTRIFKVIFVLSTIVAVTDCC). Residues 27-247 (SSRILLLREH…TAQRKVRMAH (221 aa)) are Extracellular-facing. Disordered stretches follow at residues 78–111 (EASA…SIAA) and 124–175 (TDTW…NDKE). Residues 124–139 (TDTWLASESSTPITDS) are compositionally biased toward polar residues. 2 stretches are compositionally biased toward low complexity: residues 140-152 (ETVT…THTG) and 159-171 (SSSS…TPSP). An EGF-like domain is found at 179 to 224 (QMLPCSEAYNTSFCLNGGHCFQHPMVNNTVFHSCLCVNDYDGERCA). 3 disulfide bridges follow: C183–C198, C192–C212, and C214–C223. N188 and N205 each carry an N-linked (GlcNAc...) asparagine glycan. Positions 215–245 (VNDYDGERCAYKSWNGDYIYSPPTAQRKVRM) are interaction with cni. Residues 248 to 268 (IVFSFPVLLMLSSLYVLFAAV) traverse the membrane as a helical segment. Residues 269–295 (FMLRNVPDYRRKQQQLHLHKQRFFVRC) are Cytoplasmic-facing.

As to quaternary structure, interacts with cni. As to expression, expressed in nurse cells and oocyte up to oogenesis stage 7. Specifically accumulates in dorsal anterior corner of the oocyte during stages 9/10, at later stages expression is seen as an anterior ring. In stage 10 ovaries, it is concentrated between the oocyte nucleus and the adjacent oolemma. During vitellogenesis stage it can be detected at the oocyte surface, especially on the microvilli. It is also found at the microvilli covering the apical surface of the follicular epithelium and within follicle cells.

Its subcellular location is the cell membrane. Its function is as follows. Critical for defining the anterior-posterior and dorsal-ventral axes of the egg. May signal directly to dorsal follicle cells through the receptor torpedo (top). During oogenesis this signaling pathway instructs follicle cells to follow a dorsal pathway of development rather than the default ventral pathway. The sequence is that of Protein gurken (grk) from Drosophila melanogaster (Fruit fly).